The sequence spans 187 residues: Elongation factor P (187 aa).

It belongs to the elongation factor P family.

The protein localises to the cytoplasm. Its pathway is protein biosynthesis; polypeptide chain elongation. Its function is as follows. Involved in peptide bond synthesis. Stimulates efficient translation and peptide-bond synthesis on native or reconstituted 70S ribosomes in vitro. Probably functions indirectly by altering the affinity of the ribosome for aminoacyl-tRNA, thus increasing their reactivity as acceptors for peptidyl transferase. The chain is Elongation factor P from Nocardia farcinica (strain IFM 10152).